The following is a 767-amino-acid chain: MTIPTSISGFPRIGRDRELKKAIEAYWKGNATLDDVRETGRELRVRHWRLEKDAGIDLIPSNDFSLYDQMLDTAVLLNVIPARYRRLGFDNPEETLFAMARGYQGERGDVTALPMKKWFTTNYHYLVPEFDSSTEVRLNGTKPFDEYLEAKSLGIETKPVLIGPYTFLKLSRDAEAQELTIDEGLVDAVADVYAEVLRRFAKLGAQWVQLDEPYLVLDKHEGDVSLFKSLYSRLLPARDSGVRVLLNTYFGNIADIYETVKLFEFDGVGLDLIEGRDENLKAVEHHGVAARTTLFAGVVNGRNIWRNNYAESIALVEALQQVTANVAVASACSLLHVPFSTKGEEQLGDKVLRHFAFAVEKLEEVREIADLMQLDDDAKRQSTALAANQALFDGSRVVADEVVRARIAALADADYVRRPERGERQRLQREALGLPLLPTTTIGSFPQTKQVRAERARLRKGEISQGQYDEFIRRQIDDVVAKQEQIGLDVLVHGEFERNDMVEYFGQNLNGFLFTKNAWVQSYGTRCVKPPIIWGDVSRAQPITVAWSSYAQSRTAKPMKGMLTGPVTILNWSWPREDITHEEQTKQLALAIRDEVLDLEKAGIRIIQIDEAALREKLPLRESDWHREYLDWAIPAFRLVHSAVQPSTQIHTHMCYSEFNDIISDIDAMDADVISFEASRGDLVVLDAIHDAHFETEAGPGVYDIHSPRIPSVEETEERIGESLAKMDVNKVWINPDCGLKTRGNDETWPSLTHMVQAAKAMRANLD.

Residues 17–20 (RELK) and K117 contribute to the 5-methyltetrahydropteroyltri-L-glutamate site. L-homocysteine-binding positions include 442–444 (IGS) and E495. L-methionine-binding positions include 442–444 (IGS) and E495. 5-methyltetrahydropteroyltri-L-glutamate is bound by residues 526 to 527 (RC) and W572. D610 contributes to the L-homocysteine binding site. D610 is a binding site for L-methionine. E616 provides a ligand contact to 5-methyltetrahydropteroyltri-L-glutamate. The Zn(2+) site is built by H653, C655, and E677. H706 functions as the Proton donor in the catalytic mechanism. C738 lines the Zn(2+) pocket.

It belongs to the vitamin-B12 independent methionine synthase family. Requires Zn(2+) as cofactor.

It catalyses the reaction 5-methyltetrahydropteroyltri-L-glutamate + L-homocysteine = tetrahydropteroyltri-L-glutamate + L-methionine. The protein operates within amino-acid biosynthesis; L-methionine biosynthesis via de novo pathway; L-methionine from L-homocysteine (MetE route): step 1/1. Functionally, catalyzes the transfer of a methyl group from 5-methyltetrahydrofolate to homocysteine resulting in methionine formation. The sequence is that of 5-methyltetrahydropteroyltriglutamate--homocysteine methyltransferase from Bifidobacterium animalis subsp. lactis (strain AD011).